Consider the following 354-residue polypeptide: MSEQKPSLTYRDAGVDIDAGNDLVNRIKSTAARTRRPEVLGGLGGFGAMVSIPAGYKEPVLVSGTDGVGTKLRLAMQLQKHDSIGIDLVAMCVNDLVVGGAEPLFFLDYYATGKLNVDVAAQVVEGIGQGCEQAGCALVGGETAEMPGMYEGDDYDLAGFCVGIVERDKIIDGSRAQPGDSLLALGSSGPHSNGYSLIRKIIEVSGADLSQSMGDTTLADALMAPTRIYVKNLLKLIREVDVRALSHITGGGLPENIPRVLPKGTIAALDTQSWELPPVFQWLQNAGGVAQEEMYRTFNCGIGMVICVPEDQKALAMDTLNAMGEKVWQIGVMEAAESSDAEPVVRYAPGLLTA.

It belongs to the AIR synthase family.

The protein localises to the cytoplasm. It catalyses the reaction 2-formamido-N(1)-(5-O-phospho-beta-D-ribosyl)acetamidine + ATP = 5-amino-1-(5-phospho-beta-D-ribosyl)imidazole + ADP + phosphate + H(+). It participates in purine metabolism; IMP biosynthesis via de novo pathway; 5-amino-1-(5-phospho-D-ribosyl)imidazole from N(2)-formyl-N(1)-(5-phospho-D-ribosyl)glycinamide: step 2/2. In Marinobacter nauticus (strain ATCC 700491 / DSM 11845 / VT8) (Marinobacter aquaeolei), this protein is Phosphoribosylformylglycinamidine cyclo-ligase.